Consider the following 216-residue polypeptide: Refilin-A (216 aa).

The tract at residues 1 to 83 (MVGHLHLQGM…LPNPPASEMR (83 aa)) is disordered. The segment covering 12 to 22 (DSLKEQGREGL) has biased composition (basic and acidic residues). The segment covering 29–39 (GLPPSPSPSPP) has biased composition (pro residues). The segment covering 57–71 (ASSEPPGPSEARAPP) has biased composition (low complexity). Residue R163 is modified to Asymmetric dimethylarginine.

The protein belongs to the Refilin family. In terms of assembly, interacts with FLNA and FLNB.

It localises to the cytoplasm. The protein localises to the cytoskeleton. Involved in the regulation of the perinuclear actin network and nuclear shape through interaction with filamins. Plays an essential role in actin cytoskeleton formation in developing cartilaginous cells. The sequence is that of Refilin-A from Homo sapiens (Human).